Reading from the N-terminus, the 198-residue chain is PEP-dependent dihydroxyacetone kinase 1, ADP-binding subunit DhaL (198 aa).

In terms of domain architecture, DhaL spans D6–Q194. The Mg(2+) site is built by D30, D35, and D37. Residues H38–N41, A79–S80, G120, M129, R166, and D179–G181 each bind ADP.

In terms of assembly, homodimer. The dihydroxyacetone kinase complex is composed of a homodimer of DhaM, a homodimer of DhaK and the subunit DhaL. The cofactor is Mg(2+).

The protein localises to the cytoplasm. The enzyme catalyses dihydroxyacetone + phosphoenolpyruvate = dihydroxyacetone phosphate + pyruvate. It participates in polyol metabolism; glycerol degradation. ADP-binding subunit of the dihydroxyacetone kinase, which is responsible for the phosphoenolpyruvate (PEP)-dependent phosphorylation of dihydroxyacetone. DhaL-ADP is converted to DhaL-ATP via a phosphoryl group transfer from DhaM and transmits it to dihydroxyacetone binds to DhaK. This Listeria innocua serovar 6a (strain ATCC BAA-680 / CLIP 11262) protein is PEP-dependent dihydroxyacetone kinase 1, ADP-binding subunit DhaL.